The chain runs to 287 residues: Membrane protein insertase YidC 2 (287 aa).

The signal sequence occupies residues 1–26 (MKKKKRFKQKLLIASLVIGLMAVLSG). Residue Cys27 is the site of N-palmitoyl cysteine attachment. A lipid anchor (S-diacylglycerol cysteine) is attached at Cys27. 5 helical membrane passes run 65 to 85 (YAVG…PLMI), 135 to 155 (MMGC…YQAI), 178 to 198 (YILP…SMMG), 207 to 224 (AMIV…GITL), and 228 to 250 (LALY…NNPF).

It belongs to the OXA1/ALB3/YidC family. Type 2 subfamily.

The protein resides in the cell membrane. Its function is as follows. Required for the insertion and/or proper folding and/or complex formation of integral membrane proteins into the membrane. Involved in integration of membrane proteins that insert both dependently and independently of the Sec translocase complex, as well as at least some lipoproteins. The protein is Membrane protein insertase YidC 2 of Listeria monocytogenes serovar 1/2a (strain ATCC BAA-679 / EGD-e).